Here is a 523-residue protein sequence, read N- to C-terminus: Tryptophan 6-halogenase SttH (523 aa).

FAD-binding residues include Gly14, Ser40, Ile43, Val46, Val48, and Ala51. Lys79 is an active-site residue. L-tryptophan is bound at residue Pro97. The FAD site is built by Val203 and Leu354. Residues Thr365 and Gly366 each coordinate chloride. Ile367 serves as a coordination point for FAD. The L-tryptophan site is built by Tyr456 and Tyr457.

It belongs to the flavin-dependent halogenase family. Bacterial tryptophan halogenase subfamily. Homodimer.

The catalysed reaction is L-tryptophan + FADH2 + chloride + O2 = 6-chloro-L-tryptophan + FAD + 2 H2O. It catalyses the reaction D-tryptophan + FADH2 + chloride + O2 = 6-chloro-D-tryptophan + FAD + 2 H2O. Its function is as follows. Catalyzes the chlorination of tryptophan (Trp) at C6 position to yield 6-chloro-tryptophan. Accepts both L and D-Trp as the substrates. The enzyme also uses bromide to yield 6-bromo-Trp. In vitro, can also catalyze the halogenation of 3-indolepropionic acid, N-methyltryptophan and non-indolic aromatic substrates such as kynurenine, anthranilamide and N-phenylanthranilic acid. The protein is Tryptophan 6-halogenase SttH of Streptomyces toxytricini (Actinomyces toxytricini).